The following is a 246-amino-acid chain: Purine nucleoside phosphorylase ORF3 (246 aa).

Residues histidine 71, cysteine 110, and histidine 127 each contribute to the Zn(2+) site.

Belongs to the purine nucleoside phosphorylase YfiH/LACC1 family. In terms of assembly, homodimer. Cu(2+) is required as a cofactor. The cofactor is Zn(2+).

The catalysed reaction is adenosine + phosphate = alpha-D-ribose 1-phosphate + adenine. It carries out the reaction S-methyl-5'-thioadenosine + phosphate = 5-(methylsulfanyl)-alpha-D-ribose 1-phosphate + adenine. It catalyses the reaction inosine + phosphate = alpha-D-ribose 1-phosphate + hypoxanthine. The enzyme catalyses adenosine + H2O + H(+) = inosine + NH4(+). Purine nucleoside enzyme that catalyzes the phosphorolysis of adenosine and inosine nucleosides, yielding D-ribose 1-phosphate and the respective free bases, adenine and hypoxanthine. Also catalyzes the phosphorolysis of S-methyl-5'-thioadenosine into adenine and S-methyl-5-thio-alpha-D-ribose 1-phosphate. Also has adenosine deaminase activity. The chain is Purine nucleoside phosphorylase ORF3 from Streptomyces griseus.